We begin with the raw amino-acid sequence, 558 residues long: Glypican-1 (558 aa).

The signal sequence occupies residues 1 to 23 (MELRARGWWLLCAAAALVACTRG). Intrachain disulfides connect C32–C68, C62–C256, C69–C259, C191–C343, C246–C279, C268–C415, and C272–C401. N-linked (GlcNAc...) asparagine glycosylation is found at N79 and N116. The disordered stretch occupies residues 478 to 531 (FQDASDDGSGSGSGGGCPDDACGRRVSKKSSSSRTPLIHALPGLSEQEGQKTSA). Residues S486, S488, and S490 are each glycosylated (O-linked (Xyl...) (heparan sulfate) serine). S530 is lipidated: GPI-anchor amidated serine. The propeptide at 531–558 (AATRPEPHYFFLLFLFTLVLAAARPRWR) is removed in mature form.

The protein belongs to the glypican family. S-nitrosylated in a Cu(2+)-dependent manner. Nitric acid (NO) is released from the nitrosylated cysteines by ascorbate or by some other reducing agent, in a Cu(2+) or Zn(2+) dependent manner. This free nitric oxide is then capable of cleaving the heparan sulfate side chains. In terms of processing, N- and O-glycosylated. N-glycosylation is mainly of the complex type containing sialic acid. O-glycosylated with heparan sulfate. The heparan sulfate chains can be cleaved either by the action of heparanase or, degraded by a deaminative process that uses nitric oxide (NO) released from the S-nitrosylated cysteines. This process is triggered by ascorbate, or by some other reducing agent, in a Cu(2+)- or Zn(2+) dependent manner. Cu(2+) ions are provided by ceruloproteins such as APP, PRNP or CP which associate with GCP1 in intracellular compartments or lipid rafts. Post-translationally, this cell-associated glypican is further processed to give rise to a medium-released species. As to expression, nervous system.

It localises to the cell membrane. Its subcellular location is the endosome. The protein resides in the secreted. It is found in the extracellular space. Its function is as follows. Cell surface proteoglycan that bears heparan sulfate. May act as a catalyst in increasing the rate of conversion of prion protein PRPN(C) to PRNP(Sc) via associating (via the heparan sulfate side chains) with both forms of PRPN, targeting them to lipid rafts and facilitating their interaction. Required for proper skeletal muscle differentiation by sequestering FGF2 in lipid rafts preventing its binding to receptors (FGFRs) and inhibiting the FGF-mediated signaling. Binds Cu(2+) or Zn(2+) ions. Binds, via the heparan sulfate side chains, alpha-4 (V) collagen and participates in Schwann cell myelination. This is Glypican-1 (Gpc1) from Rattus norvegicus (Rat).